The chain runs to 289 residues: ATP synthase gamma chain (289 aa).

This sequence belongs to the ATPase gamma chain family. F-type ATPases have 2 components, CF(1) - the catalytic core - and CF(0) - the membrane proton channel. CF(1) has five subunits: alpha(3), beta(3), gamma(1), delta(1), epsilon(1). CF(0) has three main subunits: a, b and c.

Its subcellular location is the cell membrane. Produces ATP from ADP in the presence of a proton gradient across the membrane. The gamma chain is believed to be important in regulating ATPase activity and the flow of protons through the CF(0) complex. The protein is ATP synthase gamma chain of Alkaliphilus metalliredigens (strain QYMF).